We begin with the raw amino-acid sequence, 510 residues long: NAD(P)H-quinone oxidoreductase subunit 2 B, chloroplastic (510 aa).

Transmembrane regions (helical) follow at residues 24–44 (LLLFDGSFIFPECILIFGLIL), 57–77 (IPWLYFISSTSLVMSITALLF), 99–119 (IFQFLILLCSTLCIPLSVEYI), 124–144 (MAITEFLLFVLTATLGGMFLC), 149–169 (LITIFVAPECFSLCSYLLSGY), 183–203 (YLLMGGASSSILVHAFSWLYG), 227–247 (PGISIALIFITVGIGFKLSLA), 295–315 (WHLLLEILAILSMIVGNLIAI), 323–343 (MLAYSSIGQIGYVIIGIIVGD), 354–374 (YMLFYISMNLGTFACIVLFGL), 395–415 (ALSLALCLLSLGGLPPLAGFF), 418–438 (LHLFWCGWQAGLYFLVLIGLL), and 482–502 (LSMIVCVIASTIPGISMNPIV).

It belongs to the complex I subunit 2 family. NDH is composed of at least 16 different subunits, 5 of which are encoded in the nucleus.

It localises to the plastid. The protein resides in the chloroplast thylakoid membrane. It catalyses the reaction a plastoquinone + NADH + (n+1) H(+)(in) = a plastoquinol + NAD(+) + n H(+)(out). It carries out the reaction a plastoquinone + NADPH + (n+1) H(+)(in) = a plastoquinol + NADP(+) + n H(+)(out). NDH shuttles electrons from NAD(P)H:plastoquinone, via FMN and iron-sulfur (Fe-S) centers, to quinones in the photosynthetic chain and possibly in a chloroplast respiratory chain. The immediate electron acceptor for the enzyme in this species is believed to be plastoquinone. Couples the redox reaction to proton translocation, and thus conserves the redox energy in a proton gradient. The chain is NAD(P)H-quinone oxidoreductase subunit 2 B, chloroplastic from Manihot esculenta (Cassava).